The sequence spans 593 residues: Mitoguardin 2 (593 aa).

Transmembrane regions (helical) follow at residues 11-31 (MIQA…TTFG) and 42-62 (PGLR…ALAA). 2 disordered regions span residues 101–134 (KKGY…HSGS) and 195–228 (LSVG…EPES). Over residues 107–123 (RRVQSPSSKSNDTLSGI) the composition is skewed to polar residues. Residues 124–134 (SSIEPSKHSGS) show a composition bias toward low complexity. Phosphoserine is present on Ser-132. Thr-206 carries the post-translational modification Phosphothreonine. Ser-220, Ser-224, and Ser-228 each carry phosphoserine. Thr-273 carries the post-translational modification Phosphothreonine. Residues Ser-276 and Ser-295 each carry the phosphoserine modification. An FFAT motif is present at residues 292–298 (SFFSATE). A helical membrane pass occupies residues 563–583 (ILLGYLGVPAASSIGLNGVLP).

It belongs to the mitoguardin family. Homodimer and heterodimer; forms heterodimers with MIGA1. Interacts with PLD6/MitoPLD. Interacts (via phosphorylated FFAT motif) with MOSPD2. In terms of processing, phosphorylation at Ser-295 of the FFAT motif activates interaction with MOSPD2.

The protein resides in the mitochondrion outer membrane. In terms of biological role, regulator of mitochondrial fusion: acts by forming homo- and heterodimers at the mitochondrial outer membrane and facilitating the formation of PLD6/MitoPLD dimers. May act by regulating phospholipid metabolism via PLD6/MitoPLD. In Bos taurus (Bovine), this protein is Mitoguardin 2.